Reading from the N-terminus, the 345-residue chain is S-adenosylmethionine:tRNA ribosyltransferase-isomerase (345 aa).

It belongs to the QueA family. As to quaternary structure, monomer.

The protein localises to the cytoplasm. It catalyses the reaction 7-aminomethyl-7-carbaguanosine(34) in tRNA + S-adenosyl-L-methionine = epoxyqueuosine(34) in tRNA + adenine + L-methionine + 2 H(+). Its pathway is tRNA modification; tRNA-queuosine biosynthesis. Transfers and isomerizes the ribose moiety from AdoMet to the 7-aminomethyl group of 7-deazaguanine (preQ1-tRNA) to give epoxyqueuosine (oQ-tRNA). The protein is S-adenosylmethionine:tRNA ribosyltransferase-isomerase of Helicobacter pylori (strain G27).